The chain runs to 101 residues: Immunity protein CdiI-2 (101 aa).

As to quaternary structure, specifically interacts with the truncated CT fragment of cognate toxin protein CdiA-2, which inhibits CdiA-2 tRNA nuclease activity.

Immunity protein component of a toxin-immunity protein module, which functions as a cellular contact-dependent growth inhibition (CDI) system. CDI modules allow bacteria to communicate with and inhibit the growth of closely related neighboring bacteria in a contact-dependent fashion. Neutralizes the toxic activity of cognate toxin CdiA (C-terminal 301 residue CT fragment) upon expression in E.coli. Does not inhibit toxic activity of CdiA from other strains of B.pseudomallei. Its function is as follows. Expression of this cdiAIB locus in B.thailandensis confers protection against other bacteria carrying the locus; growth inhibition requires cellular contact. The chain is Immunity protein CdiI-2 (cdiI2) from Burkholderia pseudomallei (strain 1026b).